The primary structure comprises 113 residues: Large ribosomal subunit protein uL22 (113 aa).

This sequence belongs to the universal ribosomal protein uL22 family. In terms of assembly, part of the 50S ribosomal subunit.

Its function is as follows. This protein binds specifically to 23S rRNA; its binding is stimulated by other ribosomal proteins, e.g. L4, L17, and L20. It is important during the early stages of 50S assembly. It makes multiple contacts with different domains of the 23S rRNA in the assembled 50S subunit and ribosome. The globular domain of the protein is located near the polypeptide exit tunnel on the outside of the subunit, while an extended beta-hairpin is found that lines the wall of the exit tunnel in the center of the 70S ribosome. In Bacillus cytotoxicus (strain DSM 22905 / CIP 110041 / 391-98 / NVH 391-98), this protein is Large ribosomal subunit protein uL22.